The primary structure comprises 276 residues: NAD-capped RNA hydrolase NudC (276 aa).

Arginine 82 contributes to the substrate binding site. The Zn(2+) site is built by cysteine 112 and cysteine 115. Glutamate 125 is a binding site for substrate. Residues cysteine 130 and cysteine 133 each contribute to the Zn(2+) site. Tyrosine 138 serves as a coordination point for substrate. The region spanning 139 to 262 is the Nudix hydrolase domain; that stretch reads PRISPSMIVL…SIARYLIDVY (124 aa). 3 residues coordinate a divalent metal cation: alanine 172, glutamate 188, and glutamate 192. The short motif at 173-194 is the Nudix box element; it reads GFAEPGESAEDCLIREVREEVQ. 206–213 serves as a coordination point for substrate; the sequence is QCWPFPHS. Glutamate 233 serves as a coordination point for a divalent metal cation. Position 255 (alanine 255) interacts with substrate.

It belongs to the Nudix hydrolase family. NudC subfamily. As to quaternary structure, homodimer. Mg(2+) serves as cofactor. Mn(2+) is required as a cofactor. Requires Zn(2+) as cofactor.

It carries out the reaction a 5'-end NAD(+)-phospho-ribonucleoside in mRNA + H2O = a 5'-end phospho-adenosine-phospho-ribonucleoside in mRNA + beta-nicotinamide D-ribonucleotide + 2 H(+). It catalyses the reaction NAD(+) + H2O = beta-nicotinamide D-ribonucleotide + AMP + 2 H(+). The enzyme catalyses NADH + H2O = reduced beta-nicotinamide D-ribonucleotide + AMP + 2 H(+). MRNA decapping enzyme that specifically removes the nicotinamide adenine dinucleotide (NAD) cap from a subset of mRNAs by hydrolyzing the diphosphate linkage to produce nicotinamide mononucleotide (NMN) and 5' monophosphate mRNA. The NAD-cap is present at the 5'-end of some mRNAs and stabilizes RNA against 5'-processing. Has preference for mRNAs with a 5'-end purine. Catalyzes the hydrolysis of a broad range of dinucleotide pyrophosphates. This is NAD-capped RNA hydrolase NudC from Pseudomonas fluorescens (strain Pf0-1).